The primary structure comprises 382 residues: ATP phosphoribosyltransferase regulatory subunit (382 aa).

This sequence belongs to the class-II aminoacyl-tRNA synthetase family. HisZ subfamily. As to quaternary structure, heteromultimer composed of HisG and HisZ subunits.

It localises to the cytoplasm. It participates in amino-acid biosynthesis; L-histidine biosynthesis; L-histidine from 5-phospho-alpha-D-ribose 1-diphosphate: step 1/9. Functionally, required for the first step of histidine biosynthesis. May allow the feedback regulation of ATP phosphoribosyltransferase activity by histidine. The chain is ATP phosphoribosyltransferase regulatory subunit from Verminephrobacter eiseniae (strain EF01-2).